The chain runs to 253 residues: Small ribosomal subunit protein eS6 (253 aa).

Residues 200 to 253 are disordered; sequence KKRLAKRKQSENDYAKLLAQRKKESKVRRQEELKRRRSASMRDSKSSDKSAPQK. The span at 226–247 shows a compositional bias: basic and acidic residues; that stretch reads VRRQEELKRRRSASMRDSKSSD.

This sequence belongs to the eukaryotic ribosomal protein eS6 family. As to quaternary structure, component of the small ribosomal subunit. Part of the small subunit (SSU) processome, composed of more than 70 proteins and the RNA chaperone small nucleolar RNA (snoRNA) U3. In terms of processing, ribosomal protein S6 is the major substrate of protein kinases in eukaryote ribosomes.

It is found in the cytoplasm. The protein localises to the nucleus. The protein resides in the nucleolus. In terms of biological role, component of the 40S small ribosomal subunit. Plays an important role in controlling cell growth and proliferation through the selective translation of particular classes of mRNA. Part of the small subunit (SSU) processome, first precursor of the small eukaryotic ribosomal subunit. During the assembly of the SSU processome in the nucleolus, many ribosome biogenesis factors, an RNA chaperone and ribosomal proteins associate with the nascent pre-rRNA and work in concert to generate RNA folding, modifications, rearrangements and cleavage as well as targeted degradation of pre-ribosomal RNA by the RNA exosome. This chain is Small ribosomal subunit protein eS6 (RpS6), found in Spodoptera frugiperda (Fall armyworm).